Consider the following 357-residue polypeptide: 3-isopropylmalate dehydrogenase (357 aa).

Residue 76 to 89 (GYQWESLDISVRPE) coordinates NAD(+). The substrate site is built by Arg-96, Arg-106, Arg-134, and Asp-224. Residues Asp-224, Asp-248, and Asp-252 each coordinate Mg(2+). 282–294 (GSAPDIAGQNIAN) provides a ligand contact to NAD(+).

It belongs to the isocitrate and isopropylmalate dehydrogenases family. LeuB type 1 subfamily. Homodimer. Mg(2+) serves as cofactor. The cofactor is Mn(2+).

Its subcellular location is the cytoplasm. It carries out the reaction (2R,3S)-3-isopropylmalate + NAD(+) = 4-methyl-2-oxopentanoate + CO2 + NADH. It functions in the pathway amino-acid biosynthesis; L-leucine biosynthesis; L-leucine from 3-methyl-2-oxobutanoate: step 3/4. Its function is as follows. Catalyzes the oxidation of 3-carboxy-2-hydroxy-4-methylpentanoate (3-isopropylmalate) to 3-carboxy-4-methyl-2-oxopentanoate. The product decarboxylates to 4-methyl-2 oxopentanoate. The protein is 3-isopropylmalate dehydrogenase of Hydrogenovibrio crunogenus (strain DSM 25203 / XCL-2) (Thiomicrospira crunogena).